The sequence spans 351 residues: N-acetyl-gamma-glutamyl-phosphate reductase (351 aa).

Cysteine 154 is a catalytic residue.

The protein belongs to the NAGSA dehydrogenase family. Type 1 subfamily.

It localises to the cytoplasm. It catalyses the reaction N-acetyl-L-glutamate 5-semialdehyde + phosphate + NADP(+) = N-acetyl-L-glutamyl 5-phosphate + NADPH + H(+). The protein operates within amino-acid biosynthesis; L-arginine biosynthesis; N(2)-acetyl-L-ornithine from L-glutamate: step 3/4. Catalyzes the NADPH-dependent reduction of N-acetyl-5-glutamyl phosphate to yield N-acetyl-L-glutamate 5-semialdehyde. The polypeptide is N-acetyl-gamma-glutamyl-phosphate reductase (Prochlorococcus marinus (strain AS9601)).